The sequence spans 275 residues: Tryptase (275 aa).

Positions 1–20 (MLNLLVLALPLLVSLVHTAP) are cleaved as a signal peptide. A propeptide spans 21-30 (APGQALERAG) (activation peptide). Residues 31–272 (IVGGKEAPGH…YLDWIHQCIP (242 aa)) form the Peptidase S1 domain. Cys-59 and Cys-75 form a disulfide bridge. Residues His-74 and Asp-121 each act as charge relay system in the active site. Asn-132 carries an N-linked (GlcNAc...) asparagine glycan. Disulfide bonds link Cys-155–Cys-230, Cys-188–Cys-211, and Cys-220–Cys-248. Residue Ser-224 is the Charge relay system of the active site. A glycan (N-linked (GlcNAc...) asparagine) is linked at Asn-233.

This sequence belongs to the peptidase S1 family. Tryptase subfamily. As to quaternary structure, homotetramer.

The protein resides in the secreted. It carries out the reaction Preferential cleavage: Arg-|-Xaa, Lys-|-Xaa, but with more restricted specificity than trypsin.. Tryptase is the major neutral protease present in mast cells and is secreted upon the coupled activation-degranulation response of this cell type. The chain is Tryptase (MCT7) from Sus scrofa (Pig).